The following is a 369-amino-acid chain: Cytochrome b561 and DOMON domain-containing protein At3g07570 (369 aa).

The N-terminal stretch at 1 to 22 (MKLYSVSIIIFVLIALSTIVNA) is a signal peptide. Residues 55–167 (QNFILRYART…PRQSLLYAVG (113 aa)) form the DOMON domain. One can recognise a Cytochrome b561 domain in the interval 174 to 369 (SSPDFRLREH…GLEVRKFLKK (196 aa)). The chain crosses the membrane as a helical span at residues 212-232 (THGLMNMFGWGILIIVGAIVA). Residues His213 and His246 each contribute to the heme b site. Helical transmembrane passes span 247–267 (IALQ…GLVL) and 279–299 (HKGL…ALLA). Heme b is bound by residues His279 and His315. 2 consecutive transmembrane segments (helical) span residues 321–341 (LLII…KAGT) and 343–363 (WNGG…GLEV).

The cofactor is heme b.

It localises to the membrane. Its function is as follows. May act as a catecholamine-responsive trans-membrane electron transporter. This chain is Cytochrome b561 and DOMON domain-containing protein At3g07570, found in Arabidopsis thaliana (Mouse-ear cress).